The primary structure comprises 725 residues: Polyribonucleotide nucleotidyltransferase (725 aa).

The Mg(2+) site is built by Asp-487 and Asp-493. Residues 554-613 (PRIETMQIPTDKIREVIGTGGKVIREIVEKTGAKIDIQDTGVVKIASSDGKAIKAAYNWI) form the KH domain. One can recognise an S1 motif domain in the interval 623 to 691 (GMIYDGTVVK…ERGKIRLSMK (69 aa)). The tract at residues 699–725 (EDLTEKLKAEREADRNRERQARQSAGE) is disordered. The segment covering 701-719 (LTEKLKAEREADRNRERQA) has biased composition (basic and acidic residues).

It belongs to the polyribonucleotide nucleotidyltransferase family. It depends on Mg(2+) as a cofactor.

It is found in the cytoplasm. It carries out the reaction RNA(n+1) + phosphate = RNA(n) + a ribonucleoside 5'-diphosphate. Its function is as follows. Involved in mRNA degradation. Catalyzes the phosphorolysis of single-stranded polyribonucleotides processively in the 3'- to 5'-direction. The polypeptide is Polyribonucleotide nucleotidyltransferase (Methylobacterium sp. (strain 4-46)).